Reading from the N-terminus, the 264-residue chain is V-type proton ATPase subunit D (264 aa).

The segment covering 214-230 (RDNAETDAQMKAKKAEQ) has biased composition (basic and acidic residues). The segment at 214–264 (RDNAETDAQMKAKKAEQQRLALADSENAEGEQTENTPADILAAEEDEDVIF) is disordered. Residues 255-264 (AAEEDEDVIF) are compositionally biased toward acidic residues.

It belongs to the V-ATPase D subunit family. V-ATPase is a heteromultimeric enzyme composed of a peripheral catalytic V1 complex (components A to H) attached to an integral membrane V0 proton pore complex (components: a, c, c', c'', d, e, f and VOA1).

The protein resides in the vacuole membrane. Its function is as follows. Subunit of the V1 complex of vacuolar(H+)-ATPase (V-ATPase), a multisubunit enzyme composed of a peripheral complex (V1) that hydrolyzes ATP and a membrane integral complex (V0) that translocates protons. V-ATPase is responsible for acidifying and maintaining the pH of intracellular compartments. In Neurospora crassa (strain ATCC 24698 / 74-OR23-1A / CBS 708.71 / DSM 1257 / FGSC 987), this protein is V-type proton ATPase subunit D (vma-8).